The primary structure comprises 82 residues: Cell division topological specificity factor (82 aa).

It belongs to the MinE family.

Its function is as follows. Prevents the cell division inhibition by proteins MinC and MinD at internal division sites while permitting inhibition at polar sites. This ensures cell division at the proper site by restricting the formation of a division septum at the midpoint of the long axis of the cell. In Hahella chejuensis (strain KCTC 2396), this protein is Cell division topological specificity factor.